The sequence spans 318 residues: Protease HtpX homolog (318 aa).

2 helical membrane-spanning segments follow: residues 6–26 (TAML…LIGG) and 28–48 (AGMM…YWNS). Position 130 (H130) interacts with Zn(2+). Residue E131 is part of the active site. Residue H134 participates in Zn(2+) binding. 2 helical membrane-spanning segments follow: residues 145–165 (ITAT…FFGG) and 173–193 (PLGF…AMLV). Zn(2+) is bound at residue E202. Positions 284–318 (NVSTGPVRAVNPTRKSRSVPNTGRGGSQPPRGPWS) are disordered.

It belongs to the peptidase M48B family. Zn(2+) is required as a cofactor.

The protein resides in the cell inner membrane. The protein is Protease HtpX homolog of Rhizobium etli (strain CIAT 652).